The chain runs to 481 residues: MSILGLNGAPVGAEQLGSALDRMKKAHLEQGPANLELRLSRLDRAIAMLLENREAIADAVSADFGNRSREQTLLCDIAGSVASLKDSREHVAKWMEPEHHKAMFPGAEARVEFQPLGVVGVISPWNFPIVLAFGPLAGIFAAGNRAMLKPSELTPRTSALLAELIARYFDETELTTVLGDAEVGALFSAQPFDHLIFTGGTAVAKHIMRAAADNLVPVTLELGGKSPVIVSRSADMADVAQRVLTVKTFNAGQICLAPDYVLLPEESLDSFVAEATRFVAAMYPSLLDNPDYTSIINARNFDRLHRYLTDAQAKGGRVIEINPAAEELGDSGIRKIAPTLIVNVSDEMLVLNEEIFGPLLPIKTYRDFDSAIDYVNSKQRPLASYFFGEDAVEREQVLKRTVSGAVVVNDVMSHVMMDTLPFGGVGHSGMGAYHGIYGFRTFSHAKPVLVQSPVGESNLAMRAPYGEAIHGLLSVLLSTEC.

Residues Glu221 and Cys255 contribute to the active site.

Belongs to the aldehyde dehydrogenase family. Homodimer.

The enzyme catalyses (E)-coniferaldehyde + NADP(+) + H2O = (E)-ferulate + NADPH + 2 H(+). The catalysed reaction is (E)-coniferaldehyde + NAD(+) + H2O = (E)-ferulate + NADH + 2 H(+). Catalyzes the NAD(+)-dependent oxidation of coniferyl aldehyde to ferulic acid and which is induced during growth with eugenol as the carbon source. The protein is Coniferyl aldehyde dehydrogenase (calB) of Pseudomonas sp. (strain HR199 / DSM 7063).